The following is a 433-amino-acid chain: Probable non-inhibitory serpin-Z5 (433 aa).

Positions 1–12 (MEPKEKKQKLDT) are enriched in basic and acidic residues. The segment at 1–43 (MEPKEKKQKLDTSEVASPSLSKTHLKKKKTKKQKIRKSQEITS) is disordered. Over residues 23 to 36 (THLKKKKTKKQKIR) the composition is skewed to basic residues. Residues 380–404 (GTEAVTFTAFRSAYLGCALVKPIDF) are RCL.

Belongs to the serpin family. In terms of tissue distribution, weakly expressed during seedling development.

In Arabidopsis thaliana (Mouse-ear cress), this protein is Probable non-inhibitory serpin-Z5.